A 122-amino-acid polypeptide reads, in one-letter code: Large ribosomal subunit protein uL14 (122 aa).

Belongs to the universal ribosomal protein uL14 family. As to quaternary structure, part of the 50S ribosomal subunit. Forms a cluster with proteins L3 and L19. In the 70S ribosome, L14 and L19 interact and together make contacts with the 16S rRNA in bridges B5 and B8.

Functionally, binds to 23S rRNA. Forms part of two intersubunit bridges in the 70S ribosome. The polypeptide is Large ribosomal subunit protein uL14 (Salinispora tropica (strain ATCC BAA-916 / DSM 44818 / JCM 13857 / NBRC 105044 / CNB-440)).